A 494-amino-acid chain; its full sequence is DDB1- and CUL4-associated factor 4 (494 aa).

Residues 1–65 (MHQSSWKSRR…AGSSSVPDLP (65 aa)) form a disordered region. Residues 7-20 (KSRRHRRRGHRHSA) show a composition bias toward basic residues. The segment covering 51–60 (STSSTAGSSS) has biased composition (low complexity). WD repeat units lie at residues 367–406 (FHDSAVTSVQILQEEQCLMASDMAGTIKLWDLRTTKCIRQ) and 409–450 (GHVN…LLRT).

Interacts with DDB1 and CUL4A.

It functions in the pathway protein modification; protein ubiquitination. May function as a substrate receptor for CUL4-DDB1 E3 ubiquitin-protein ligase complex. The polypeptide is DDB1- and CUL4-associated factor 4 (DCAF4) (Bos taurus (Bovine)).